We begin with the raw amino-acid sequence, 123 residues long: Protein Wnt-7 (123 aa).

S1 is lipidated: O-palmitoleoyl serine; by PORCN. N79 and N90 each carry an N-linked (GlcNAc...) asparagine glycan. An intrachain disulfide couples C89 to C104.

It belongs to the Wnt family. Post-translationally, palmitoleoylation is required for efficient binding to frizzled receptors. Depalmitoleoylation leads to Wnt signaling pathway inhibition.

It is found in the secreted. The protein localises to the extracellular space. The protein resides in the extracellular matrix. Ligand for members of the frizzled family of seven transmembrane receptors. Probable developmental protein. May be a signaling molecule which affects the development of discrete regions of tissues. Is likely to signal over only few cell diameters. In Strongylocentrotus purpuratus (Purple sea urchin), this protein is Protein Wnt-7 (WNT-7).